A 148-amino-acid polypeptide reads, in one-letter code: Ribonuclease H (148 aa).

Positions 1–142 (MSDSVEMFTD…ADQLANRGVD (142 aa)) constitute an RNase H type-1 domain. Residues Asp10, Glu48, Asp70, and Asp134 each coordinate Mg(2+).

Belongs to the RNase H family. In terms of assembly, monomer. Mg(2+) is required as a cofactor.

Its subcellular location is the cytoplasm. The catalysed reaction is Endonucleolytic cleavage to 5'-phosphomonoester.. In terms of biological role, endonuclease that specifically degrades the RNA of RNA-DNA hybrids. This chain is Ribonuclease H, found in Pseudomonas putida (strain ATCC 700007 / DSM 6899 / JCM 31910 / BCRC 17059 / LMG 24140 / F1).